The following is a 116-amino-acid chain: Large ribosomal subunit protein bL20 (116 aa).

Belongs to the bacterial ribosomal protein bL20 family.

Its function is as follows. Binds directly to 23S ribosomal RNA and is necessary for the in vitro assembly process of the 50S ribosomal subunit. It is not involved in the protein synthesizing functions of that subunit. The chain is Large ribosomal subunit protein bL20 from Nautilia profundicola (strain ATCC BAA-1463 / DSM 18972 / AmH).